The following is a 370-amino-acid chain: tRNA-specific 2-thiouridylase MnmA (370 aa).

Residues 9–16 and M35 contribute to the ATP site; that span reads GLSGGVDS. Residues 95–97 are interaction with target base in tRNA; that stretch reads NPD. The active-site Nucleophile is C100. C100 and C198 are oxidised to a cystine. Residue G124 participates in ATP binding. Positions 148–150 are interaction with tRNA; the sequence is KDQ. C198 functions as the Cysteine persulfide intermediate in the catalytic mechanism. The interval 316–317 is interaction with tRNA; it reads RY.

This sequence belongs to the MnmA/TRMU family.

The protein localises to the cytoplasm. It catalyses the reaction S-sulfanyl-L-cysteinyl-[protein] + uridine(34) in tRNA + AH2 + ATP = 2-thiouridine(34) in tRNA + L-cysteinyl-[protein] + A + AMP + diphosphate + H(+). Functionally, catalyzes the 2-thiolation of uridine at the wobble position (U34) of tRNA, leading to the formation of s(2)U34. The protein is tRNA-specific 2-thiouridylase MnmA of Acidovorax ebreus (strain TPSY) (Diaphorobacter sp. (strain TPSY)).